The sequence spans 169 residues: Deoxyuridine 5'-triphosphate nucleotidohydrolase (169 aa).

Residues 1–10 (MAENQINSPE) show a composition bias toward polar residues. Positions 1–25 (MAENQINSPEITEPSPKVQKLDHPE) are disordered. Substrate-binding positions include 91-93 (RSG), 105-108 (GVID), G116, R159, and 164-165 (FG).

This sequence belongs to the dUTPase family. Homodimer. Mg(2+) is required as a cofactor. As to expression, vegetative and floral merismatic cells and provascular and vascular merismatic derivatives.

The enzyme catalyses dUTP + H2O = dUMP + diphosphate + H(+). Its pathway is pyrimidine metabolism; dUMP biosynthesis; dUMP from dCTP (dUTP route): step 2/2. In terms of biological role, this enzyme is involved in nucleotide metabolism: it produces dUMP, the immediate precursor of thymidine nucleotides and it decreases the intracellular concentration of dUTP so that uracil cannot be incorporated into DNA. It may have as well a metabolic role in merismatic cells. This chain is Deoxyuridine 5'-triphosphate nucleotidohydrolase, found in Solanum lycopersicum (Tomato).